The sequence spans 273 residues: 2,3,4,5-tetrahydropyridine-2,6-dicarboxylate N-succinyltransferase (273 aa).

Belongs to the transferase hexapeptide repeat family.

The protein resides in the cytoplasm. The catalysed reaction is (S)-2,3,4,5-tetrahydrodipicolinate + succinyl-CoA + H2O = (S)-2-succinylamino-6-oxoheptanedioate + CoA. Its pathway is amino-acid biosynthesis; L-lysine biosynthesis via DAP pathway; LL-2,6-diaminopimelate from (S)-tetrahydrodipicolinate (succinylase route): step 1/3. The sequence is that of 2,3,4,5-tetrahydropyridine-2,6-dicarboxylate N-succinyltransferase from Acinetobacter baumannii (strain SDF).